The sequence spans 314 residues: Homoserine O-acetyltransferase (314 aa).

The active-site Acyl-thioester intermediate is Cys-142. Substrate contacts are provided by Lys-163 and Ser-192. Residue His-235 is the Proton acceptor of the active site. Glu-237 is a catalytic residue. Arg-249 is a binding site for substrate.

This sequence belongs to the MetA family.

The protein resides in the cytoplasm. It catalyses the reaction L-homoserine + acetyl-CoA = O-acetyl-L-homoserine + CoA. It functions in the pathway amino-acid biosynthesis; L-methionine biosynthesis via de novo pathway; O-acetyl-L-homoserine from L-homoserine: step 1/1. Functionally, transfers an acetyl group from acetyl-CoA to L-homoserine, forming acetyl-L-homoserine. This is Homoserine O-acetyltransferase from Streptococcus pneumoniae serotype 19F (strain G54).